A 396-amino-acid polypeptide reads, in one-letter code: Flavohemoprotein (396 aa).

One can recognise a Globin domain in the interval 1 to 136 (MLDNHTIAIV…LANVFIQRED (136 aa)). H85 is a heme b binding site. Catalysis depends on charge relay system residues Y95 and E135. Positions 147-396 (GGWSGVRPFR…YECFGPHKVV (250 aa)) are reductase. An FAD-binding FR-type domain is found at 150-255 (SGVRPFRIVN…AAPHGDFFLD (106 aa)). Residues Y188 and 204 to 207 (RQYS) contribute to the FAD site. Residue 268 to 273 (GVGQTP) coordinates NADP(+). 389 to 392 (CFGP) is a binding site for FAD.

Belongs to the globin family. Two-domain flavohemoproteins subfamily. This sequence in the C-terminal section; belongs to the flavoprotein pyridine nucleotide cytochrome reductase family. Heme b serves as cofactor. FAD is required as a cofactor.

The catalysed reaction is 2 nitric oxide + NADPH + 2 O2 = 2 nitrate + NADP(+) + H(+). The enzyme catalyses 2 nitric oxide + NADH + 2 O2 = 2 nitrate + NAD(+) + H(+). Functionally, is involved in NO detoxification in an aerobic process, termed nitric oxide dioxygenase (NOD) reaction that utilizes O(2) and NAD(P)H to convert NO to nitrate, which protects the bacterium from various noxious nitrogen compounds. Therefore, plays a central role in the inducible response to nitrosative stress. This Pectobacterium atrosepticum (strain SCRI 1043 / ATCC BAA-672) (Erwinia carotovora subsp. atroseptica) protein is Flavohemoprotein.